Consider the following 780-residue polypeptide: MAAVDLEKLRASGAGKAIGVLTSGGDAQGMNAAVRAVTRMGIYVGAKVFLIHEGYEGLVEGGENIKQANWLSVSNIIQLGGTVIGSARCKAFTTREGRRAAAYNLVQHGITNLCVIGGDGSLTGANIFRSEWGSLLEELVAEGKISETMARTYSHLNIAGLVGSIDNDFCGTDMTIGTDSALHRIMEVIDAITTTAQSHQRTFVLEVMGRRCGYLALVSALASGADWLFIPEAPPEDGWENFMCERLGETRSRGSRLNIIIIAEGAIDRDGKPISSSYVKDLVVQRLGFDTRVTVLGHVQRGGTPSAFDRVLSSKMAMEAVMALLEATHDTPACVVTLSGNQSVRLPLMECVQMTKEVQKAMDDKRFDEAIQLRGGSFENNWNIYKLLAHQKPPKEKSNFSLAILNVGAPAAGMNAAVRSAVRTGISHGHTVYVVHDGFEGLAKGQVQEVGWHDVAGWLGRGGSMLGTKRTLPKGQLESIVENIRIYGIHALLVVGGFEAYEGVLQLVEARGRYEELCIVMCVIPATISNNVPGTDFSLGSDTAVNAAMESCDRIKQSASGTKRRVFIVETMGGYCGYLATVTGIAVGADAAYVFEDPFNIHDLKVNVEHMTEKMKTDIQRGLVLRNEKCHDYYTTEFLYNLYSSEGKGVFDCRTNVLGHLQQGGAPTPFDRNYGTKLGVKAMLWLSEKLRDVYRKGRVFANAPDSACVIGLKKKAVAFSPVTELKKDTDFEHRMPREQWWLSLRLMLKMLAQYRISMAAYVSGELEHVTRRTLSMDKGF.

Residue A2 is modified to N-acetylalanine. The interval 2-390 (AAVDLEKLRA…NWNIYKLLAH (389 aa)) is N-terminal catalytic PFK domain 1. ATP is bound by residues G25, 88–89 (RC), and 118–121 (GDGS). D119 is a binding site for Mg(2+). Residues 164–166 (SID), R201, 208–210 (MGR), E264, R292, and 298–301 (HVQR) each bind substrate. The active-site Proton acceptor is the D166. Phosphoserine is present on S377. Positions 391-400 (QKPPKEKSNF) are interdomain linker. Positions 401–780 (SLAILNVGAP…RRTLSMDKGF (380 aa)) are C-terminal regulatory PFK domain 2. Residues R470, 527 to 531 (TISNN), R565, 572 to 574 (MGG), and E628 each bind beta-D-fructose 2,6-bisphosphate. O-linked (GlcNAc) serine glycosylation is present at S529. Phosphotyrosine is present on Y640. Beta-D-fructose 2,6-bisphosphate contacts are provided by residues R654, 660 to 663 (HLQQ), and R734. S775 is subject to Phosphoserine.

The protein belongs to the phosphofructokinase type A (PFKA) family. ATP-dependent PFK group I subfamily. Eukaryotic two domain clade 'E' sub-subfamily. In terms of assembly, homo- and heterotetramers. Phosphofructokinase (PFK) enzyme functions as a tetramer composed of different combinations of 3 types of subunits, called PFKM (M), PFKL (L) and PFKP (P). The composition of the PFK tetramer differs according to the tissue type it is present in. The kinetic and regulatory properties of the tetrameric enzyme are dependent on the subunit composition, hence can vary across tissues. Requires Mg(2+) as cofactor. In terms of processing, glcNAcylation at Ser-529 by OGT decreases enzyme activity, leading to redirect glucose flux through the oxidative pentose phosphate pathway. Glycosylation is stimulated by both hypoxia and glucose deprivation.

The protein localises to the cytoplasm. The catalysed reaction is beta-D-fructose 6-phosphate + ATP = beta-D-fructose 1,6-bisphosphate + ADP + H(+). Its pathway is carbohydrate degradation; glycolysis; D-glyceraldehyde 3-phosphate and glycerone phosphate from D-glucose: step 3/4. Its activity is regulated as follows. Allosterically activated by ADP, AMP, or fructose 2,6-bisphosphate, and allosterically inhibited by ATP or citrate. GlcNAcylation by OGT overcomes allosteric regulation. Its function is as follows. Catalyzes the phosphorylation of D-fructose 6-phosphate to fructose 1,6-bisphosphate by ATP, the first committing step of glycolysis. Negatively regulates the phagocyte oxidative burst in response to bacterial infection by controlling cellular NADPH biosynthesis and NADPH oxidase-derived reactive oxygen species. Upon macrophage activation, drives the metabolic switch toward glycolysis, thus preventing glucose turnover that produces NADPH via pentose phosphate pathway. The sequence is that of ATP-dependent 6-phosphofructokinase, liver type (PFKL) from Pongo abelii (Sumatran orangutan).